Consider the following 445-residue polypeptide: Gamma-glutamyl phosphate reductase (445 aa).

It belongs to the gamma-glutamyl phosphate reductase family.

Its subcellular location is the cytoplasm. It carries out the reaction L-glutamate 5-semialdehyde + phosphate + NADP(+) = L-glutamyl 5-phosphate + NADPH + H(+). Its pathway is amino-acid biosynthesis; L-proline biosynthesis; L-glutamate 5-semialdehyde from L-glutamate: step 2/2. Functionally, catalyzes the NADPH-dependent reduction of L-glutamate 5-phosphate into L-glutamate 5-semialdehyde and phosphate. The product spontaneously undergoes cyclization to form 1-pyrroline-5-carboxylate. The polypeptide is Gamma-glutamyl phosphate reductase (Persephonella marina (strain DSM 14350 / EX-H1)).